Reading from the N-terminus, the 32-residue chain is Peptide II.10.10 (32 aa).

3 disulfide bridges follow: Cys5-Cys24, Cys10-Cys29, and Cys14-Cys31.

This sequence belongs to the short scorpion toxin superfamily. Potassium channel inhibitor family. Alpha-KTx 10 subfamily. As to expression, expressed by the venom gland.

The protein localises to the secreted. The polypeptide is Peptide II.10.10 (Centruroides tecomanus (Scorpion)).